Reading from the N-terminus, the 25-residue chain is XAITAEPVGTPETLEYRVFIQKDGK.

Monomer. The cofactor is Mg(2+).

It carries out the reaction diphosphate + H2O = 2 phosphate + H(+). The polypeptide is Inorganic pyrophosphatase (Cyanophora paradoxa).